We begin with the raw amino-acid sequence, 254 residues long: Protein orai-2 (254 aa).

4 helical membrane passes run 66 to 83 (TSALLSGFAMVAMVEVQL), 94 to 114 (LIAFSACTTVLVAVHLFALLI), 148 to 168 (LAWGFSTVLGILLFLAEVVLL), and 196 to 216 (AALVSTIIMVPVGLIFVVFTI).

This sequence belongs to the Orai family. Oligomerizes in homomeric and heteromeric ORAI complexes. Native CRAC channels most likely consist of hexameric ORAI heteromers, implying that diverse ORAI1, ORAI2 and ORAI3 subunit combinations with distinct biophysical properties can operate in a cell-type specific way. Interacts with STIM1; this regulates channel activity. Interacts with CRACR2A/EFCAB4B.

It is found in the cell membrane. The enzyme catalyses Ca(2+)(in) = Ca(2+)(out). CRAC channels are regulated by fast Ca(2+)-dependent inactivation (FCDI), a mechanism that limits Ca(2+) influx and cell toxicity. ORAI2 channels display prominent FCDI. Inhibited by lanthanides such as Gd(3+) ions. Functionally, pore-forming subunit of inward rectifying Ca(2+) release-activated Ca(2+) (CRAC) channels. Assembles with ORAI1 and ORAI3 to form hexameric CRAC channels that mediate Ca(2+) influx upon depletion of endoplasmic reticulum Ca(2+) store and channel activation by Ca(2+) sensor STIM1, a process known as store-operated Ca(2+) entry (SOCE). Various pore subunit combinations may account for distinct CRAC channel spatiotemporal and cell-type specific dynamics. ORAI1 mainly contributes to the generation of Ca(2+) plateaus involved in sustained Ca(2+) entry and is dispensable for cytosolic Ca(2+) oscillations, whereas ORAI2 and ORAI3 generate oscillatory patterns. CRAC channels assemble in Ca(2+) signaling microdomains where Ca(2+) influx is coupled to calmodulin and calcineurin signaling and activation of NFAT transcription factors recruited to ORAI1 via AKAP5. CRAC channels are the main pathway for Ca(2+) influx in T cells and promote the immune response to pathogens by activating NFAT-dependent cytokine and chemokine transcription. The sequence is that of Protein orai-2 (ORAI2) from Homo sapiens (Human).